We begin with the raw amino-acid sequence, 276 residues long: MATYFVGDIQGCNDELQQLLALAQFNPQHDELWLTGDLVARGPKSLDVLRFVYGLGDRATTVLGNHDLNLLAVDAGYSQAKKKDKTENILTAPDRHELMTWLRTQPIMAEHPTLPVMMTHAGLSPQWDLATARHCAREVEMLLRSDQGNWLLGHMYGEEPSHWDARLTGLPRWRYIINSFTRMRFCRNDGSLEFKCKEAPSDKPALLAPWFEVRQAAPDEPHLVFGHWAALMGKCPLPTIKALDTGCVWGNQLTLWRWDDNAMFSLNCPAYASGGE.

Belongs to the Ap4A hydrolase family.

It catalyses the reaction P(1),P(4)-bis(5'-adenosyl) tetraphosphate + H2O = 2 ADP + 2 H(+). In terms of biological role, hydrolyzes diadenosine 5',5'''-P1,P4-tetraphosphate to yield ADP. The polypeptide is Bis(5'-nucleosyl)-tetraphosphatase, symmetrical (Tolumonas auensis (strain DSM 9187 / NBRC 110442 / TA 4)).